A 420-amino-acid polypeptide reads, in one-letter code: UDP-N-acetylmuramoylalanine--D-glutamate ligase (420 aa).

109–115 (GSVGKST) lines the ATP pocket.

This sequence belongs to the MurCDEF family.

It localises to the cytoplasm. The catalysed reaction is UDP-N-acetyl-alpha-D-muramoyl-L-alanine + D-glutamate + ATP = UDP-N-acetyl-alpha-D-muramoyl-L-alanyl-D-glutamate + ADP + phosphate + H(+). It functions in the pathway cell wall biogenesis; peptidoglycan biosynthesis. Functionally, cell wall formation. Catalyzes the addition of glutamate to the nucleotide precursor UDP-N-acetylmuramoyl-L-alanine (UMA). The chain is UDP-N-acetylmuramoylalanine--D-glutamate ligase from Fervidobacterium nodosum (strain ATCC 35602 / DSM 5306 / Rt17-B1).